Here is a 215-residue protein sequence, read N- to C-terminus: RNA pyrophosphohydrolase (215 aa).

A Nudix hydrolase domain is found at 6-149 (GFRPNVGIIL…KRDVYQLALT (144 aa)). Residues 38–59 (GGIKYGETPMQAMYRELHEETG) carry the Nudix box motif.

This sequence belongs to the Nudix hydrolase family. RppH subfamily. Requires a divalent metal cation as cofactor.

In terms of biological role, accelerates the degradation of transcripts by removing pyrophosphate from the 5'-end of triphosphorylated RNA, leading to a more labile monophosphorylated state that can stimulate subsequent ribonuclease cleavage. The chain is RNA pyrophosphohydrolase from Burkholderia vietnamiensis (strain G4 / LMG 22486) (Burkholderia cepacia (strain R1808)).